The following is a 260-amino-acid chain: Membrane protein insertase YidC 1 (260 aa).

A signal peptide spans 1-22 (MLKSYRAVLVSLSLLLVFVLSG). A lipid anchor (N-palmitoyl cysteine) is attached at Cys23. Residue Cys23 is the site of S-diacylglycerol cysteine attachment. 5 helical membrane passes run 29 to 49 (IDAHSTGIWDHYFVYPISFMI), 52 to 72 (VAHHIPGASFGIAIIIMTLVI), 133 to 153 (LAGCWPLLIQMPIFSALYYAI), 164 to 184 (FLWVNLGHADPYHILPIIAAL), and 213 to 233 (MPAMILFMGFAAPSGLVLYWI).

Belongs to the OXA1/ALB3/YidC family. Type 2 subfamily.

The protein resides in the cell membrane. Required for the insertion and/or proper folding and/or complex formation of integral membrane proteins into the membrane. Involved in integration of membrane proteins that insert both dependently and independently of the Sec translocase complex, as well as at least some lipoproteins. This Bacillus anthracis protein is Membrane protein insertase YidC 1.